The primary structure comprises 994 residues: Glycine dehydrogenase (decarboxylating) (994 aa).

Residues 1-20 (MTDHAENRCGLEGPRPFSSR) form a disordered region. Position 716 is an N6-(pyridoxal phosphate)lysine (Lys716).

The protein belongs to the GcvP family. The glycine cleavage system is composed of four proteins: P, T, L and H. The cofactor is pyridoxal 5'-phosphate.

It catalyses the reaction N(6)-[(R)-lipoyl]-L-lysyl-[glycine-cleavage complex H protein] + glycine + H(+) = N(6)-[(R)-S(8)-aminomethyldihydrolipoyl]-L-lysyl-[glycine-cleavage complex H protein] + CO2. Functionally, the glycine cleavage system catalyzes the degradation of glycine. The P protein binds the alpha-amino group of glycine through its pyridoxal phosphate cofactor; CO(2) is released and the remaining methylamine moiety is then transferred to the lipoamide cofactor of the H protein. The polypeptide is Glycine dehydrogenase (decarboxylating) (Cutibacterium acnes (strain DSM 16379 / KPA171202) (Propionibacterium acnes)).